Here is a 330-residue protein sequence, read N- to C-terminus: MQGSVTEFLKPRLVDIEQISSTHAKVTLEPLERGFGHTLGNALRRILLSSMPGCAVTEVEIEGVLHEYSTKEGVQEDILEILLNLKGLAVRVAEGKDEVFITLNKSGSGPVVAGDITHDGDVEIANPEHVICHLTDDNAEIAMRIKVERGRGYVPASARIHTEEDERPIGRLLVDATYSPVDKIAYAVEAARVEQRTDLDKLVIDMETNGTLEPEEAIRRAATILAEQLDAFVDLRDVRVPEEKEEKPEFDPILLRPVDDLELTVRSANCLKAEAIHYIGDLVQRTEVELLKTPNLGKKSLTEIKDVLASRGLSLGMRLENWPPASIAED.

The segment at 1–236 is alpha N-terminal domain (alpha-NTD); it reads MQGSVTEFLK…EQLDAFVDLR (236 aa). Positions 250–330 are alpha C-terminal domain (alpha-CTD); sequence FDPILLRPVD…NWPPASIAED (81 aa).

Belongs to the RNA polymerase alpha chain family. In terms of assembly, homodimer. The RNAP catalytic core consists of 2 alpha, 1 beta, 1 beta' and 1 omega subunit. When a sigma factor is associated with the core the holoenzyme is formed, which can initiate transcription.

It carries out the reaction RNA(n) + a ribonucleoside 5'-triphosphate = RNA(n+1) + diphosphate. In terms of biological role, DNA-dependent RNA polymerase catalyzes the transcription of DNA into RNA using the four ribonucleoside triphosphates as substrates. The polypeptide is DNA-directed RNA polymerase subunit alpha (Vibrio vulnificus (strain CMCP6)).